The following is a 360-amino-acid chain: DNA replication and repair protein RecF (360 aa).

Residue 30-37 (GANGSGKT) participates in ATP binding.

Belongs to the RecF family.

It is found in the cytoplasm. Its function is as follows. The RecF protein is involved in DNA metabolism; it is required for DNA replication and normal SOS inducibility. RecF binds preferentially to single-stranded, linear DNA. It also seems to bind ATP. The protein is DNA replication and repair protein RecF of Acinetobacter baumannii (strain ATCC 17978 / DSM 105126 / CIP 53.77 / LMG 1025 / NCDC KC755 / 5377).